The sequence spans 963 residues: Protocadherin alpha-C1 (963 aa).

The N-terminal stretch at 1-18 (MVGCGVAVLCLWVSCGAA) is a signal peptide. Cadherin domains follow at residues 19 to 124 (AGQL…SPLF), 125 to 233 (PAGD…APVF), 234 to 340 (ERSV…APEL), 349 to 445 (VPED…TPNF), and 446 to 555 (PQPQ…YPVI). The Extracellular portion of the chain corresponds to 19–683 (AGQLEYSVPE…GGQLSAQNLY (665 aa)). Residue N38 is glycosylated (N-linked (GlcNAc...) asparagine). N-linked (GlcNAc...) asparagine glycosylation is found at N248 and N274. An N-linked (GlcNAc...) asparagine glycan is attached at N562. In terms of domain architecture, Cadherin 6 spans 570 to 667 (VPRSARTGHL…NSVPQLLPDF (98 aa)). Residues 684–704 (LVIALACISFLFLGCLLFFVC) form a helical membrane-spanning segment. The Cytoplasmic segment spans residues 705–963 (TKLHQSPGCC…GNSTTDNSDQ (259 aa)). 4 PXXP repeats span residues 812–815 (PRQP), 845–848 (PGGP), 886–889 (PGNP), and 904–907 (PGSP). The tract at residues 812–907 (PRQPNPDWRY…PDKFIIPGSP (96 aa)) is 4 X 4 AA repeats of P-X-X-P. Positions 844–963 (GPGGPDQQWP…GNSTTDNSDQ (120 aa)) are disordered. Positions 922–936 (DKSDFITFGKKEETK) are enriched in basic and acidic residues.

The protein resides in the cell membrane. In terms of biological role, potential calcium-dependent cell-adhesion protein. May be involved in the establishment and maintenance of specific neuronal connections in the brain. This Homo sapiens (Human) protein is Protocadherin alpha-C1 (PCDHAC1).